The sequence spans 457 residues: B-cell linker protein (457 aa).

The interval 36–306 (IKKLKVKGPP…FPPTQKPVHQ (271 aa)) is disordered. A compositionally biased stretch (acidic residues) spans 57-74 (PADEEEQWSDDFDSDYEN). 5 positions are modified to phosphotyrosine; by SYK: Tyr72, Tyr84, Tyr96, Tyr178, and Tyr189. The segment covering 172–187 (LEDEADYVVPVEDNDE) has biased composition (acidic residues). The span at 207 to 218 (NRSTKPNSSSKH) shows a compositional bias: polar residues. Basic and acidic residues predominate over residues 272–290 (CEEKPVPAERHRGSSHRQD). One can recognise an SH2 domain in the interval 347–454 (WYAGACDRKS…KDSTRLKYAV (108 aa)).

Associates with PLCG1, VAV1 and NCK1 in a B-cell antigen receptor-dependent fashion. Interacts with VAV3, PLCG2 and GRB2. Interacts through its SH2 domain with CD79A. Interacts (via SH2 domain) with SYK; phosphorylated and activated by SYK. Interacts (via SH2 domain) with SCIMP; this interaction is dependent on phosphorylation of SCIMP 'Tyr-120'. In terms of processing, following BCR activation, phosphorylated on tyrosine residues by SYK and LYN. When phosphorylated, serves as a scaffold to assemble downstream targets of antigen activation, including PLCG1, VAV1, GRB2 and NCK1. Phosphorylation of Tyr-84, Tyr-178 and Tyr-189 facilitates PLCG1 binding. Phosphorylation of Tyr-72 facilitates VAV1 and NCK1 binding. Phosphorylation is required for both Ca(2+) and MAPK signaling pathways. Phosphorylation of Tyr-96 is required for the binding of BTK. Expressed in the spleen and weakly in thymus, no expression was seen in liver, testis, or brain. Expressed in B-cell lines representing different developmental stages from the pre-B to the plasma cell stage, but not in a T-cell or a fibroblast cell line.

The protein localises to the cytoplasm. Its subcellular location is the cell membrane. Its function is as follows. Functions as a central linker protein, downstream of the B-cell receptor (BCR), bridging the SYK kinase to a multitude of signaling pathways and regulating biological outcomes of B-cell function and development. Plays a role in the activation of ERK/EPHB2, MAP kinase p38 and JNK. Modulates AP1 activation. Important for the activation of NF-kappa-B and NFAT. Plays an important role in BCR-mediated PLCG1 and PLCG2 activation and Ca(2+) mobilization and is required for trafficking of the BCR to late endosomes. However, does not seem to be required for pre-BCR-mediated activation of MAP kinase and phosphatidyl-inositol 3 (PI3) kinase signaling. May be required for the RAC1-JNK pathway. Plays a critical role in orchestrating the pro-B cell to pre-B cell transition. May play an important role in BCR-induced B-cell apoptosis. This chain is B-cell linker protein (Blnk), found in Mus musculus (Mouse).